A 335-amino-acid polypeptide reads, in one-letter code: MTVTATERIVTVFGTGNQAGAVARALLADKTSQFKVRAISRHPDSASSRTLSALGVQVVKADGWNLEELTRAFADTWAAFVNTNSDDPLFLQKGDGPTEFDLGKNIIDSLVAAKVQHLVYSCFASSVEQTKGKLFIKPMEMKYQALKYARETGHFATTCGIYAAWYYEQFLDKATADVFGGFPTTPDEEGYITFRAPLWGDDEHPSFVSITHDFGDMVHGILLEPEQWDGKSVPAASDVMTFEQLAQTLQNATGRKSRYIPLPSWEDFGRGIPELDDHKLLFAFTQATGGRYFGDVPTETKTALRLKRRAAEAQGKSGNEANLLSMEEWFKTNFA.

NADP(+)-binding positions include glycine 14–glutamine 18, arginine 41–serine 45, aspartate 62–glycine 63, threonine 83–serine 85, lysine 142, and tyrosine 166–glutamine 169.

It belongs to the NmrA-type oxidoreductase family.

The protein operates within secondary metabolite biosynthesis. NmrA-like family domain-containing oxidoreductase; part of the lnb gene cluster that mediates the biosynthesis of diastereomeric piperazines. Lna and lnb clusters encode sets of enzymes that produce overlapping sets of previously undescribed metabolites such as piperazinomycin-like metabolites or morpholine. The lna and lnb biosynthetic pathways appear to be part of a signaling network that controls the formation of sclerotia, a resilient overwintering structure. One primary function of the non-canonical nonribosomal peptide synthetases lnaA and lnbA consists in the reduction of L-tyrosine. The presence in the clusters of tailoring enzymes such as the oxidoreductases lnaB, lnbB, lnaE or lnbE, as well as of the cytochrome P450 monooxygenases lnaC, lnaD, or lnbC, might explain formation of various diastereomeric piperazines. The sequence is that of NmrA-like family domain-containing oxidoreductase lnbB from Aspergillus flavus (strain ATCC 200026 / FGSC A1120 / IAM 13836 / NRRL 3357 / JCM 12722 / SRRC 167).